The sequence spans 360 residues: Phosphate acyltransferase (360 aa).

It belongs to the PlsX family. Homodimer. Probably interacts with PlsY.

The protein resides in the cytoplasm. The enzyme catalyses a fatty acyl-[ACP] + phosphate = an acyl phosphate + holo-[ACP]. It functions in the pathway lipid metabolism; phospholipid metabolism. Catalyzes the reversible formation of acyl-phosphate (acyl-PO(4)) from acyl-[acyl-carrier-protein] (acyl-ACP). This enzyme utilizes acyl-ACP as fatty acyl donor, but not acyl-CoA. This is Phosphate acyltransferase from Caulobacter vibrioides (strain ATCC 19089 / CIP 103742 / CB 15) (Caulobacter crescentus).